A 426-amino-acid polypeptide reads, in one-letter code: MLLYNSFTEGLKFTKTKILLRYYASALIDVPRDDVIEDAGVSKSQAMQNIRDRWYYPPDLANDLQDLDMPKAMKQEIFACAWEYTRCVIPQYTNWPRYVAFMRIIIIGIVAEFRGNLVDVTAGDDMMGYNLSTVLDALFLGTADRENMCREYRSFLLITADKSSERRNGELFRRYVNALAHSPRQWFRMRDADALARFTIAASLACNDLDDLKFSNMEYEILTEIGDTLYDAVAFFKHRSEGETNSTFAYMPPDMRVEAFHQAREVLWAMDVALAPKTTLQGVINFVRFFGGPIHMMMRRYRFVEEHLTIGQVETEKVVDQTRKNFKLWNRLDAKDAKAGDEKRYKDIVSNNSGEVMFPGLVEFLENEDNCPDCCFRESYGAETKHQFGGVQICSACREEWGRYMKSLPDRAVKAFPELAYVLSIP.

It belongs to the alpha-ionylideneethane synthase family.

The protein operates within hormone biosynthesis. Alpha-ionylideneethane synthase; part of the gene cluster that mediates the biosynthesis of abscisic acid (ABA), a phytohormone that acts antagonistically toward salicylic acid (SA), jasmonic acid (JA) and ethylene (ETH) signaling, to impede plant defense responses. The first step of the pathway catalyzes the reaction from farnesyl diphosphate to alpha-ionylideneethane performed by the alpha-ionylideneethane synthase abl3 via a three-step reaction mechanism involving 2 neutral intermediates, beta-farnesene and allofarnesene. The cytochrome P450 monooxygenase abl1 might then be involved in the conversion of alpha-ionylideneethane to alpha-ionylideneacetic acid. Alpha-ionylideneacetic acid is further converted to abscisic acid in 2 steps involving the cytochrome P450 monooxygenase abl2 and the short-chain dehydrogenase/reductase abl4, via the intermediates 1'-deoxy-ABA or 1',4'-trans-diol-ABA, depending on the order of action of these 2 enzymes. Abl2 is responsible for the hydroxylation of carbon atom C-1' and abl4 might be involved in the oxidation of the C-4' carbon atom. The sequence is that of Alpha-ionylideneethane synthase abl3 from Leptosphaeria maculans (strain JN3 / isolate v23.1.3 / race Av1-4-5-6-7-8) (Blackleg fungus).